Consider the following 118-residue polypeptide: Cell division topological specificity factor (118 aa).

Residues 86–118 (RSQAKAVSSQENGASSQEAVSSQESVSTPGAME) form a disordered region. Residues 99–112 (ASSQEAVSSQESVS) show a composition bias toward low complexity.

The protein belongs to the MinE family.

Prevents the cell division inhibition by proteins MinC and MinD at internal division sites while permitting inhibition at polar sites. This ensures cell division at the proper site by restricting the formation of a division septum at the midpoint of the long axis of the cell. The sequence is that of Cell division topological specificity factor from Prochlorococcus marinus (strain MIT 9313).